Reading from the N-terminus, the 231-residue chain is Probable intron-encoded endonuclease 1 (231 aa).

Belongs to the LAGLIDADG endonuclease family.

It localises to the mitochondrion. Endonuclease involved in mitochondrial 21S rRNA gene intron homing. In Wickerhamomyces canadensis (Yeast), this protein is Probable intron-encoded endonuclease 1.